Reading from the N-terminus, the 917-residue chain is Transcription factor E2F8 (917 aa).

The segment at 1–122 is disordered; the sequence is MSSTLSEGQT…TEQGEEVEKL (122 aa). Polar residues-rich tracts occupy residues 16–27 and 37–48; these read LSPSKATSTNNK and PLKNSNKASTSE. The span at 93 to 103 shows a compositional bias: basic and acidic residues; the sequence is IRNREKERAVD. Residues 105–117 show a composition bias toward acidic residues; that stretch reads SESENSQETEQGE. A DNA-binding region spans residues 126–195; the sequence is RKDKSLGLLC…LAKNRYTWHG (70 aa). Disordered stretches follow at residues 221–252, 353–386, 461–497, 556–615, 671–698, and 813–834; these read QIRQRSQEREEREFDLDGEEKENEEMSSFEVD, PAFKWTGPEDIPSPKDLEISTTSSAPKPLESRSS, EQSADGRPNNAVTDSSQSSKQPESTSASNHGPPGMQI, VGAN…SVSP, LEKEEKSQTSDNEAGLTPVRQPHSQPQK, and GSVTPNPHTPEQSSSLQSPHPG. The span at 233–252 shows a compositional bias: acidic residues; that stretch reads EFDLDGEEKENEEMSSFEVD. The DNA-binding element occupies 273–359; sequence RKDKSLRVMS…GRKPAFKWTG (87 aa). Polar residues predominate over residues 371 to 386; that stretch reads ISTTSSAPKPLESRSS. Composition is skewed to low complexity over residues 475 to 488 and 568 to 578; these read SSQSSKQPESTSAS and TSNNQTNQSSS. A compositionally biased stretch (polar residues) spans 595–605; the sequence is EKSSVGSPSKM. Residues 815–830 are compositionally biased toward polar residues; sequence VTPNPHTPEQSSSLQS.

Belongs to the E2F/DP family. Homodimer and heterodimer: mainly forms homodimers and, to a lesser extent, heterodimers with e2f7.

The protein resides in the nucleus. Functionally, atypical E2F transcription factor that participates in various processes such as angiogenesis and polyploidization of specialized cells. Mainly acts as a transcription repressor that binds DNA independently of DP proteins and specifically recognizes the E2 recognition site 5'-TTTC[CG]CGC-3'. Directly represses transcription of classical E2F transcription factors such as e2f1. Acts as a regulator of S-phase by recognizing and binding the E2-related site 5'-TTCCCGCC-3' and mediating repression of G1/S-regulated genes. Acts as a promoter of sprouting angiogenesis, possibly by acting as a transcription activator and promoting expression of vegfa. In Danio rerio (Zebrafish), this protein is Transcription factor E2F8 (e2f8).